A 167-amino-acid chain; its full sequence is Ureidoglycolate lyase (167 aa).

It belongs to the ureidoglycolate lyase family. Homodimer. The cofactor is Ni(2+).

It carries out the reaction (S)-ureidoglycolate = urea + glyoxylate. Its pathway is nitrogen metabolism; (S)-allantoin degradation. In terms of biological role, catalyzes the catabolism of the allantoin degradation intermediate (S)-ureidoglycolate, generating urea and glyoxylate. Involved in the utilization of allantoin as nitrogen source. This Pseudomonas fluorescens (strain ATCC BAA-477 / NRRL B-23932 / Pf-5) protein is Ureidoglycolate lyase.